The primary structure comprises 159 residues: Ribosomal RNA large subunit methyltransferase H (159 aa).

S-adenosyl-L-methionine is bound by residues L76, G108, and 127 to 132; that span reads FGKMTL.

Belongs to the RNA methyltransferase RlmH family. Homodimer.

Its subcellular location is the cytoplasm. It carries out the reaction pseudouridine(1915) in 23S rRNA + S-adenosyl-L-methionine = N(3)-methylpseudouridine(1915) in 23S rRNA + S-adenosyl-L-homocysteine + H(+). In terms of biological role, specifically methylates the pseudouridine at position 1915 (m3Psi1915) in 23S rRNA. This Lysinibacillus sphaericus (strain C3-41) protein is Ribosomal RNA large subunit methyltransferase H.